Consider the following 33-residue polypeptide: Cytochrome b6-f complex subunit 8 (33 aa).

The helical transmembrane segment at Leu2–Val22 threads the bilayer.

It belongs to the PetN family. As to quaternary structure, the 4 large subunits of the cytochrome b6-f complex are cytochrome b6, subunit IV (17 kDa polypeptide, PetD), cytochrome f and the Rieske protein, while the 4 small subunits are PetG, PetL, PetM and PetN. The complex functions as a dimer.

The protein localises to the plastid. It localises to the organellar chromatophore thylakoid membrane. Functionally, component of the cytochrome b6-f complex, which mediates electron transfer between photosystem II (PSII) and photosystem I (PSI), cyclic electron flow around PSI, and state transitions. This Paulinella chromatophora protein is Cytochrome b6-f complex subunit 8.